The sequence spans 239 residues: Fatty acid metabolism regulator protein (239 aa).

Residues 6 to 74 (KGPASFAEKY…HGKPTQVNNF (69 aa)) form the HTH gntR-type domain. The segment at residues 34–53 (ERELSELIGVTRTTLREVLQ) is a DNA-binding region (H-T-H motif).

Homodimer.

The protein resides in the cytoplasm. Its function is as follows. Multifunctional regulator of fatty acid metabolism. The polypeptide is Fatty acid metabolism regulator protein (Shewanella denitrificans (strain OS217 / ATCC BAA-1090 / DSM 15013)).